A 28-amino-acid polypeptide reads, in one-letter code: uncharacterized protein (28 aa).

A helical membrane pass occupies residues 5–27 (SAFHACNIIFLPLVKCASATIML).

The protein resides in the membrane. This is an uncharacterized protein from Saccharomyces cerevisiae (strain ATCC 204508 / S288c) (Baker's yeast).